The sequence spans 113 residues: UPF0482 protein YnfB (113 aa).

The first 28 residues, 1-28 (MNNTLSKRLCLTAMLTLAAVVYTTSAFA), serve as a signal peptide directing secretion.

This sequence belongs to the UPF0482 family.

The sequence is that of UPF0482 protein YnfB from Salmonella agona (strain SL483).